Reading from the N-terminus, the 135-residue chain is Large ribosomal subunit protein bL21 (135 aa).

The tract at residues 85-135 is disordered; it reads YRVKRGHRQQYTQIEIESLNANGPASSDDEEAAETSDAEPDEDPEAEPAEA. Polar residues predominate over residues 93-107; it reads QQYTQIEIESLNANG. The segment covering 111-135 has biased composition (acidic residues); sequence SDDEEAAETSDAEPDEDPEAEPAEA.

It belongs to the bacterial ribosomal protein bL21 family. Part of the 50S ribosomal subunit. Contacts protein L20.

In terms of biological role, this protein binds to 23S rRNA in the presence of protein L20. The sequence is that of Large ribosomal subunit protein bL21 from Salinibacter ruber (strain DSM 13855 / M31).